Consider the following 647-residue polypeptide: DNA mismatch repair protein MutL (647 aa).

The span at 387-400 shows a compositional bias: basic and acidic residues; it reads SAKPVHEATDEKAE. The disordered stretch occupies residues 387 to 412; that stretch reads SAKPVHEATDEKAEPQSTSVKFAERK.

It belongs to the DNA mismatch repair MutL/HexB family.

Functionally, this protein is involved in the repair of mismatches in DNA. It is required for dam-dependent methyl-directed DNA mismatch repair. May act as a 'molecular matchmaker', a protein that promotes the formation of a stable complex between two or more DNA-binding proteins in an ATP-dependent manner without itself being part of a final effector complex. The chain is DNA mismatch repair protein MutL from Streptococcus sanguinis (strain SK36).